The chain runs to 423 residues: Transcription factor IIIB 50 kDa subunit (423 aa).

A TFIIB-type zinc finger spans residues 1 to 34 (MSKNCPECGSSRVVEDDLYSQKQWVCEDCGSVVS). Residues Cys5, Cys8, Cys26, and Cys29 each contribute to the Zn(2+) site. Repeat 2 spans residues 171-245 (LESFCYDFKL…LARMKYSLMK (75 aa)). Positions 325-340 (QTSQYSESELSDSKSS) are enriched in low complexity. The segment at 325–358 (QTSQYSESELSDSKSSVQTQCKSPPDEEDEGCEL) is disordered. Cys373 carries the cysteine sulfenic acid (-SOH) modification.

It belongs to the TFIIB family. Component of TFIIIB complexes. Interacts with TBP and forms a ternary complex with TBp and target DNA sequences. In response to oxidative stress, a Cys-residue is reversibly oxidized to cysteine sulfenic acid. This impairs formation of a ternary complex with TBP and DNA and down-regulates expression of target genes in response to oxidative stress.

Its subcellular location is the nucleus. Functionally, general activator of RNA polymerase III transcription. Factor exclusively required for RNA polymerase III transcription of genes with promoter elements upstream of the initiation sites. Contributes to the regulation of gene expression; functions as activator in the absence of oxidative stress. Down-regulates expression of target genes in response to oxidative stress. Overexpression protects cells against apoptosis in response to oxidative stress. The polypeptide is Transcription factor IIIB 50 kDa subunit (brf2) (Danio rerio (Zebrafish)).